Reading from the N-terminus, the 560-residue chain is Putative transport protein VSAL_I2029 (560 aa).

5 consecutive transmembrane segments (helical) span residues 14–34, 37–57, 66–86, 94–114, and 161–181; these read ILLL…KIGS, LGSS…GYTF, FMLF…GIFL, LLVL…GYYF, and NLSV…ILLA. RCK C-terminal domains follow at residues 203 to 292 and 293 to 376; these read RGIG…FRNG and KEVF…KIGF. Helical transmembrane passes span 386–406, 409–429, 451–471, 478–498, and 539–559; these read LLAF…TMSF, VTFG…LGFL, GLLV…IEYF, VLAA…LVGA, and AGTY…MILL.

Belongs to the AAE transporter (TC 2.A.81) family. YbjL subfamily.

Its subcellular location is the cell membrane. In Aliivibrio salmonicida (strain LFI1238) (Vibrio salmonicida (strain LFI1238)), this protein is Putative transport protein VSAL_I2029.